The following is a 152-amino-acid chain: Protein-export protein SecB (152 aa).

The protein belongs to the SecB family. In terms of assembly, homotetramer, a dimer of dimers. One homotetramer interacts with 1 SecA dimer.

It is found in the cytoplasm. In terms of biological role, one of the proteins required for the normal export of preproteins out of the cell cytoplasm. It is a molecular chaperone that binds to a subset of precursor proteins, maintaining them in a translocation-competent state. It also specifically binds to its receptor SecA. The sequence is that of Protein-export protein SecB from Rickettsia bellii (strain RML369-C).